Reading from the N-terminus, the 94-residue chain is MKHWRLVSYDIREPKRLRRVAKIMEGFGERIQYSVFRIYSTDKELEKLRWKLAKVTEEEDNIFYLTLCTKCASGAHTQEKKSAWPEAPKTLKIL.

Asp-10 serves as a coordination point for Mg(2+).

This sequence belongs to the CRISPR-associated endoribonuclease Cas2 protein family. As to quaternary structure, homodimer, forms a heterotetramer with a Cas1 homodimer. Mg(2+) is required as a cofactor.

Its function is as follows. CRISPR (clustered regularly interspaced short palindromic repeat), is an adaptive immune system that provides protection against mobile genetic elements (viruses, transposable elements and conjugative plasmids). CRISPR clusters contain sequences complementary to antecedent mobile elements and target invading nucleic acids. CRISPR clusters are transcribed and processed into CRISPR RNA (crRNA). Functions as a ssRNA-specific endoribonuclease. Involved in the integration of spacer DNA into the CRISPR cassette. This is CRISPR-associated endoribonuclease Cas2 from Leptospira interrogans serogroup Icterohaemorrhagiae serovar Lai (strain 56601).